The sequence spans 657 residues: MGLLETIQHPADLARLSDEQLVQLAQEIRDFLISNVAQTGGHLGPNLCVVELTLAIHRVFDSPRDSIIFDTGHQSYVHKLVTGRQHFSTLRQQGGLSGYADRGESVHDVVESSHASSSLSWADGISRARVLNGEGDRYVVAVIGDGALTGGMTWEALNNIAADKDRRVVIVVNDNGRSYAPTVGGLADYLRSLRPAIDSLRTHKAYEGNLDWTKNKLQNGGFLGQLMYKSLHAAKKGVKDWWAPQGLFEDLGMKYIGPVDGHDQKALESAMQTAKNYAGPVIVHAMTDKGRGYAPARADEADQFHAVGVIDPETGLPLDPSTAQSWTSVFAEEIAEIADERDDIVGITAAMLIPVGLHRMAERHPQRVIDVGIAEQHALTTAAGMAFGGLHPVVAMYATFLNRGFDQLLMDVALHKAGVTVVLDRAGVTGPDGPSHHGMWDLSMLQIIPGLHLAAPRDATRLREELREAVAISDAPTVLRYSKGNVGAEVEAIERLDDGVDILARRPAGSTENDVLLVSVGAMSEMSLQVANLLGAQGISSTVVDPRWVLPVPQSIIELAAQHRIVIVIEDGVRAGGVGSRIRQEMRAAGVDTALNEVGLPVEFLAHGSRGQVLDRVGLTAQKVAHDVVAQVLGTKVPFARPLPNEQITHTGQFPTL.

Residues His-73 and 113 to 115 contribute to the thiamine diphosphate site; that span reads SHA. Asp-145 serves as a coordination point for Mg(2+). Residues 146-147, Asn-175, Tyr-293, and Glu-375 contribute to the thiamine diphosphate site; that span reads GA. Residue Asn-175 coordinates Mg(2+).

This sequence belongs to the transketolase family. DXPS subfamily. In terms of assembly, homodimer. Mg(2+) serves as cofactor. Thiamine diphosphate is required as a cofactor.

It carries out the reaction D-glyceraldehyde 3-phosphate + pyruvate + H(+) = 1-deoxy-D-xylulose 5-phosphate + CO2. It functions in the pathway metabolic intermediate biosynthesis; 1-deoxy-D-xylulose 5-phosphate biosynthesis; 1-deoxy-D-xylulose 5-phosphate from D-glyceraldehyde 3-phosphate and pyruvate: step 1/1. Functionally, catalyzes the acyloin condensation reaction between C atoms 2 and 3 of pyruvate and glyceraldehyde 3-phosphate to yield 1-deoxy-D-xylulose-5-phosphate (DXP). This is 1-deoxy-D-xylulose-5-phosphate synthase from Renibacterium salmoninarum (strain ATCC 33209 / DSM 20767 / JCM 11484 / NBRC 15589 / NCIMB 2235).